We begin with the raw amino-acid sequence, 618 residues long: UvrABC system protein C (618 aa).

The GIY-YIG domain occupies 13–92; it reads DKPGVYLMKN…IKKYRPKYNI (80 aa). The UVR domain occupies 204–239; that stretch reads LDIVENFKLNMEKAAENLEFEKAAMLRDKINIIEKI.

The protein belongs to the UvrC family. As to quaternary structure, interacts with UvrB in an incision complex.

It localises to the cytoplasm. Functionally, the UvrABC repair system catalyzes the recognition and processing of DNA lesions. UvrC both incises the 5' and 3' sides of the lesion. The N-terminal half is responsible for the 3' incision and the C-terminal half is responsible for the 5' incision. The chain is UvrABC system protein C from Clostridium botulinum (strain Okra / Type B1).